We begin with the raw amino-acid sequence, 131 residues long: Ribosome-binding factor A (131 aa).

Belongs to the RbfA family. As to quaternary structure, monomer. Binds 30S ribosomal subunits, but not 50S ribosomal subunits or 70S ribosomes.

The protein resides in the cytoplasm. Its function is as follows. One of several proteins that assist in the late maturation steps of the functional core of the 30S ribosomal subunit. Associates with free 30S ribosomal subunits (but not with 30S subunits that are part of 70S ribosomes or polysomes). Required for efficient processing of 16S rRNA. May interact with the 5'-terminal helix region of 16S rRNA. This chain is Ribosome-binding factor A, found in Picosynechococcus sp. (strain ATCC 27264 / PCC 7002 / PR-6) (Agmenellum quadruplicatum).